The sequence spans 384 residues: S-adenosylmethionine synthase (384 aa).

Residue His-15 participates in ATP binding. Asp-17 serves as a coordination point for Mg(2+). Residue Glu-43 participates in K(+) binding. 2 residues coordinate L-methionine: Glu-56 and Gln-99. Residues 99 to 109 (QSSDINQGVDR) form a flexible loop region. Residues 164-166 (DAK), 230-231 (RF), Asp-239, 245-246 (RK), Ala-262, and Lys-266 contribute to the ATP site. Residue Asp-239 participates in L-methionine binding. Residue Lys-270 participates in L-methionine binding.

The protein belongs to the AdoMet synthase family. In terms of assembly, homotetramer; dimer of dimers. Mg(2+) serves as cofactor. The cofactor is K(+).

It is found in the cytoplasm. The enzyme catalyses L-methionine + ATP + H2O = S-adenosyl-L-methionine + phosphate + diphosphate. It participates in amino-acid biosynthesis; S-adenosyl-L-methionine biosynthesis; S-adenosyl-L-methionine from L-methionine: step 1/1. Functionally, catalyzes the formation of S-adenosylmethionine (AdoMet) from methionine and ATP. The overall synthetic reaction is composed of two sequential steps, AdoMet formation and the subsequent tripolyphosphate hydrolysis which occurs prior to release of AdoMet from the enzyme. This chain is S-adenosylmethionine synthase, found in Histophilus somni (strain 129Pt) (Haemophilus somnus).